The primary structure comprises 129 residues: Small ribosomal subunit protein uS11 (129 aa).

The protein belongs to the universal ribosomal protein uS11 family. As to quaternary structure, part of the 30S ribosomal subunit. Interacts with proteins S7 and S18. Binds to IF-3.

Functionally, located on the platform of the 30S subunit, it bridges several disparate RNA helices of the 16S rRNA. Forms part of the Shine-Dalgarno cleft in the 70S ribosome. The sequence is that of Small ribosomal subunit protein uS11 from Escherichia fergusonii (strain ATCC 35469 / DSM 13698 / CCUG 18766 / IAM 14443 / JCM 21226 / LMG 7866 / NBRC 102419 / NCTC 12128 / CDC 0568-73).